We begin with the raw amino-acid sequence, 251 residues long: Ubiquinone/menaquinone biosynthesis C-methyltransferase UbiE (251 aa).

Residues Thr-74, Asp-95, and 123–124 (NA) contribute to the S-adenosyl-L-methionine site.

This sequence belongs to the class I-like SAM-binding methyltransferase superfamily. MenG/UbiE family.

It catalyses the reaction a 2-demethylmenaquinol + S-adenosyl-L-methionine = a menaquinol + S-adenosyl-L-homocysteine + H(+). It carries out the reaction a 2-methoxy-6-(all-trans-polyprenyl)benzene-1,4-diol + S-adenosyl-L-methionine = a 5-methoxy-2-methyl-3-(all-trans-polyprenyl)benzene-1,4-diol + S-adenosyl-L-homocysteine + H(+). Its pathway is quinol/quinone metabolism; menaquinone biosynthesis; menaquinol from 1,4-dihydroxy-2-naphthoate: step 2/2. The protein operates within cofactor biosynthesis; ubiquinone biosynthesis. In terms of biological role, methyltransferase required for the conversion of demethylmenaquinol (DMKH2) to menaquinol (MKH2) and the conversion of 2-polyprenyl-6-methoxy-1,4-benzoquinol (DDMQH2) to 2-polyprenyl-3-methyl-6-methoxy-1,4-benzoquinol (DMQH2). The sequence is that of Ubiquinone/menaquinone biosynthesis C-methyltransferase UbiE from Edwardsiella ictaluri (strain 93-146).